The following is a 467-amino-acid chain: Asparagine--tRNA ligase (467 aa).

The protein belongs to the class-II aminoacyl-tRNA synthetase family. Homodimer.

Its subcellular location is the cytoplasm. The enzyme catalyses tRNA(Asn) + L-asparagine + ATP = L-asparaginyl-tRNA(Asn) + AMP + diphosphate + H(+). The protein is Asparagine--tRNA ligase of Actinobacillus pleuropneumoniae serotype 3 (strain JL03).